Reading from the N-terminus, the 38-residue chain is Large ribosomal subunit protein bL36A (38 aa).

It belongs to the bacterial ribosomal protein bL36 family.

In Prochlorococcus marinus (strain MIT 9515), this protein is Large ribosomal subunit protein bL36A.